The following is a 599-amino-acid chain: Capsular polysaccharide biosynthesis protein CapD (599 aa).

The next 4 helical transmembrane spans lie at isoleucine 12–leucine 32, isoleucine 41–valine 61, serine 79–isoleucine 99, and serine 102–serine 122.

This sequence belongs to the polysaccharide synthase family.

It is found in the cell membrane. The protein operates within capsule biogenesis; capsule polysaccharide biosynthesis. Functionally, required for the biosynthesis of type 1 capsular polysaccharide. The protein is Capsular polysaccharide biosynthesis protein CapD (capD) of Staphylococcus aureus.